Consider the following 160-residue polypeptide: Ribosomal RNA large subunit methyltransferase H (160 aa).

The S-adenosyl-L-methionine site is built by Leu76 and Gly108.

The protein belongs to the RNA methyltransferase RlmH family. As to quaternary structure, homodimer.

Its subcellular location is the cytoplasm. The enzyme catalyses pseudouridine(1915) in 23S rRNA + S-adenosyl-L-methionine = N(3)-methylpseudouridine(1915) in 23S rRNA + S-adenosyl-L-homocysteine + H(+). Functionally, specifically methylates the pseudouridine at position 1915 (m3Psi1915) in 23S rRNA. The chain is Ribosomal RNA large subunit methyltransferase H from Rhodopseudomonas palustris (strain HaA2).